Reading from the N-terminus, the 338-residue chain is UPF0324 membrane protein TauZ (338 aa).

Transmembrane regions (helical) follow at residues 36–55 (YGAPAMLLALLLGLALNFLA), 75–92 (LGVALLGARISAGMLAAL), 96–118 (AIALVVAGVVLTILFALAASRLV), 125–147 (ALLTGGSVAICGASAAMAIAAVL), 162–184 (LSVTVLSTVAMVLYPMLAGLFGF), 223–245 (LIRVSMLAPVVLCFSLAIRARGL), 255–277 (PLLPGFVIGFLALAGLNSLGLIP), 290–309 (WALLIAIAAVGIKTSLGKML), and 314–336 (GAIALILAETVFLAVFVTAGLHL).

Belongs to the UPF0324 family.

It localises to the cell membrane. The polypeptide is UPF0324 membrane protein TauZ (tauZ) (Paracoccus pantotrophus (Thiosphaera pantotropha)).